The following is a 111-amino-acid chain: Translation initiation factor 1A (111 aa).

Residues 12-86 (GEMPLPSEDE…KKGEVVYRYL (75 aa)) enclose the S1-like domain.

Belongs to the eIF-1A family.

Functionally, seems to be required for maximal rate of protein biosynthesis. Enhances ribosome dissociation into subunits and stabilizes the binding of the initiator Met-tRNA(I) to 40 S ribosomal subunits. The protein is Translation initiation factor 1A (eIF1A) of Aeropyrum pernix (strain ATCC 700893 / DSM 11879 / JCM 9820 / NBRC 100138 / K1).